The sequence spans 242 residues: MAVISMKQLLEAGVHFGHQTRRWNPKMDRYIFTERNGIYIIDLQKTVKKVETAYNFVRDLAADGGKILFVGTKKQAQDSVRDEAIRCGMYYINQRWLGGTLTNFETIQKRITRLKNLEKMQEDGTFDVLPKKEVILLKKEMDRLEKFLGGIKDMNGVPDALFVIDPRKERIAIAEAHKLNIPIVAIVDTNCDPDEIDYVIPGNDDAIRAVKLLTGKMADAVIEATAGESEEEVDVEEETTTA.

This sequence belongs to the universal ribosomal protein uS2 family.

The protein is Small ribosomal subunit protein uS2 of Shouchella clausii (strain KSM-K16) (Alkalihalobacillus clausii).